The primary structure comprises 88 residues: Small ribosomal subunit protein uS17 (88 aa).

Belongs to the universal ribosomal protein uS17 family. Part of the 30S ribosomal subunit.

Functionally, one of the primary rRNA binding proteins, it binds specifically to the 5'-end of 16S ribosomal RNA. The protein is Small ribosomal subunit protein uS17 of Yersinia pseudotuberculosis serotype O:1b (strain IP 31758).